The primary structure comprises 405 residues: S-adenosylmethionine synthase (405 aa).

Residue 141 to 146 coordinates ATP; the sequence is GQGSVD.

It belongs to the AdoMet synthase 2 family. The cofactor is Mg(2+).

It catalyses the reaction L-methionine + ATP + H2O = S-adenosyl-L-methionine + phosphate + diphosphate. Its pathway is amino-acid biosynthesis; S-adenosyl-L-methionine biosynthesis; S-adenosyl-L-methionine from L-methionine: step 1/1. Functionally, catalyzes the formation of S-adenosylmethionine from methionine and ATP. The chain is S-adenosylmethionine synthase from Methanococcus maripaludis (strain C7 / ATCC BAA-1331).